Consider the following 2065-residue polypeptide: WD repeat-containing protein 81 (2065 aa).

The region spanning 325–617 (LCRNCQDELK…EPPHFGRVNV (293 aa)) is the BEACH domain. Disordered regions lie at residues 1082 to 1111 (EEEEYECDDRRSSNATSSGKVGGGSGGGSG), 1156 to 1230 (TTVG…VEDR), 1271 to 1290 (GEKNMEEEETEHDPLEDSEE), and 1595 to 1642 (ASPG…GGDI). Positions 1101–1111 (KVGGGSGGGSG) are enriched in gly residues. Residues 1156 to 1169 (TTVGTKQQNQSTAN) show a composition bias toward polar residues. Residues 1213-1228 (DGEDGGELEDEEETVE) are compositionally biased toward acidic residues. Over residues 1624-1637 (SRSPFPAPSSTSTP) the composition is skewed to low complexity. WD repeat units lie at residues 1767–1806 (GHSGTAKCLAPLAGEDYFLSGSKDKTVRLWPLYNHGDGTR), 1813–1853 (TYTE…NIRC), 1906–1945 (LSAGLIRCLAVSPGGRTIAAGFSTGFIVLLDARTGLVLRG), 1948–1986 (GHEGDILQMKAAEGNLLVSSSSDHTLTVWKDVEHKPLHQ), and 2035–2065 (NFRGTLTSLSVLPTKRLLLLGSDNGAIRLLA).

This sequence belongs to the WD repeat WDR81 family. Widely expressed.

Its subcellular location is the early endosome membrane. The protein localises to the late endosome membrane. The protein resides in the lysosome membrane. It localises to the cytoplasmic vesicle. It is found in the autophagosome membrane. Its subcellular location is the mitochondrion. The protein localises to the cytoplasm. The protein resides in the cytosol. Its function is as follows. Functions as a negative regulator of the PI3 kinase/PI3K activity associated with endosomal membranes. By modifying the phosphatidylinositol 3-phosphate/PtdInsP3 content of endosomal membranes may regulate endosome fusion, recycling, sorting and early to late endosome transport. May also play a role in aggrephagy, the macroautophagic degradation of ubiquitinated protein aggregates. May also be involved in maintenance of normal mitochondrial structure and organization. This Danio rerio (Zebrafish) protein is WD repeat-containing protein 81 (wdr81).